A 105-amino-acid chain; its full sequence is Small cysteine and glycine repeat-containing protein 10 (105 aa).

The 10 X 2 AA repeats of CG stretch occupies residues 4 to 41 (CGCGGCGGRCSGGCGGGCGGGCGGGCGGGCGGCGGGCG).

The protein belongs to the KRTAP type 28 family.

In the hair cortex, hair keratin intermediate filaments are embedded in an interfilamentous matrix, consisting of hair keratin-associated proteins (KRTAP), which are essential for the formation of a rigid and resistant hair shaft through their extensive disulfide bond cross-linking with abundant cysteine residues of hair keratins. The matrix proteins include the high-sulfur and high-glycine-tyrosine keratins. The chain is Small cysteine and glycine repeat-containing protein 10 from Homo sapiens (Human).